Consider the following 217-residue polypeptide: Uracil-DNA glycosylase (217 aa).

Asp-62 acts as the Proton acceptor in catalysis.

It belongs to the uracil-DNA glycosylase (UDG) superfamily. UNG family.

It is found in the cytoplasm. It carries out the reaction Hydrolyzes single-stranded DNA or mismatched double-stranded DNA and polynucleotides, releasing free uracil.. Excises uracil residues from the DNA which can arise as a result of misincorporation of dUMP residues by DNA polymerase or due to deamination of cytosine. The protein is Uracil-DNA glycosylase of Streptococcus suis (strain 98HAH33).